The sequence spans 432 residues: MSLNIETTQGLERRVAITVPTEIVSKAIHEEFKRAAKNVRVDGFRKGHVPAHIIEQRFGASIRQDVLNDLLPRHFFDAVIAEKINIAGRPTFAIETFEEGKDLVFTATFEVYPEVKLQGLENIKVEKPTVEITEADIDKMIDVLRKQQATWAESQDIAKADDRVTIDFVGSVDGEEFEGGKATDFVLFMGQGRMIPGFEEGIVGHKAGEQFDIDVTFPAEYHAENLKGKAAKFAITLKKVENMVLPELTDEFVAKFGPNTKSVADLRAEIRKNMERELKNALVSRVKQQVINGLIEQNPIDVPASVVEEEINVLRNQAAQRFGGNTQQAAQLPRELFEAEATRRVQVGLLFSEVIKSNELKADKERAKAMIADIASAYEQPAEVVEYYSKNKELMNNIRNVVLEEQAVDAVLAKAQVTEKVSSFDEIMNPQA.

Residues 161 to 246 enclose the PPIase FKBP-type domain; sequence DDRVTIDFVG…LKKVENMVLP (86 aa).

Belongs to the FKBP-type PPIase family. Tig subfamily.

The protein localises to the cytoplasm. It catalyses the reaction [protein]-peptidylproline (omega=180) = [protein]-peptidylproline (omega=0). Its function is as follows. Involved in protein export. Acts as a chaperone by maintaining the newly synthesized protein in an open conformation. Functions as a peptidyl-prolyl cis-trans isomerase. The sequence is that of Trigger factor from Haemophilus influenzae (strain PittGG).